A 129-amino-acid chain; its full sequence is Glycine cleavage system H protein (129 aa).

In terms of domain architecture, Lipoyl-binding spans 24–106; the sequence is TYTVGITEHA…YGQGWIFKIK (83 aa). Residue lysine 65 is modified to N6-lipoyllysine.

Belongs to the GcvH family. In terms of assembly, the glycine cleavage system is composed of four proteins: P, T, L and H. It depends on (R)-lipoate as a cofactor.

The glycine cleavage system catalyzes the degradation of glycine. The H protein shuttles the methylamine group of glycine from the P protein to the T protein. The sequence is that of Glycine cleavage system H protein from Cronobacter sakazakii (strain ATCC BAA-894) (Enterobacter sakazakii).